Consider the following 353-residue polypeptide: Aromatic amino acid aminotransferase (353 aa).

An N6-(pyridoxal phosphate)lysine modification is found at Lys217.

This sequence belongs to the class-II pyridoxal-phosphate-dependent aminotransferase family. Homodimer. Requires pyridoxal 5'-phosphate as cofactor.

It catalyses the reaction an aromatic L-alpha-amino acid + 2-oxoglutarate = an aromatic oxo-acid + L-glutamate. Its function is as follows. Aminotransferase that catalyzes the conversion of aromatic amino acids and 2-oxoglutarate into corresponding aromatic oxo acids and L-glutamate. The protein is Aromatic amino acid aminotransferase of Mycobacterium tuberculosis (strain ATCC 25177 / H37Ra).